The primary structure comprises 753 residues: Ion-translocating oxidoreductase complex subunit C (753 aa).

4Fe-4S ferredoxin-type domains follow at residues 367-397 (EMGE…QQLY) and 407-436 (KATA…VQYF). Cys-377, Cys-380, Cys-383, Cys-387, Cys-416, Cys-419, Cys-422, and Cys-426 together coordinate [4Fe-4S] cluster. Disordered regions lie at residues 517–561 (AKPD…RKAA), 606–625 (RKAE…PVDP), 640–659 (RKAE…PVDP), and 705–735 (AKAR…AVAA). Over residues 526-537 (AAREARKAEARA) the composition is skewed to basic and acidic residues. Low complexity-rich tracts occupy residues 610-622 (QQVA…VAEP), 644-656 (QQVA…VAEP), and 712-735 (QQAA…AVAA).

Belongs to the 4Fe4S bacterial-type ferredoxin family. RnfC subfamily. The complex is composed of six subunits: RnfA, RnfB, RnfC, RnfD, RnfE and RnfG. Requires [4Fe-4S] cluster as cofactor.

The protein localises to the cell inner membrane. In terms of biological role, part of a membrane-bound complex that couples electron transfer with translocation of ions across the membrane. This is Ion-translocating oxidoreductase complex subunit C from Klebsiella pneumoniae (strain 342).